Here is a 192-residue protein sequence, read N- to C-terminus: dTTP/UTP pyrophosphatase (192 aa).

The active-site Proton acceptor is the Asp-70.

This sequence belongs to the Maf family. YhdE subfamily. A divalent metal cation is required as a cofactor.

Its subcellular location is the cytoplasm. It catalyses the reaction dTTP + H2O = dTMP + diphosphate + H(+). The catalysed reaction is UTP + H2O = UMP + diphosphate + H(+). Functionally, nucleoside triphosphate pyrophosphatase that hydrolyzes dTTP and UTP. May have a dual role in cell division arrest and in preventing the incorporation of modified nucleotides into cellular nucleic acids. The chain is dTTP/UTP pyrophosphatase from Alkaliphilus oremlandii (strain OhILAs) (Clostridium oremlandii (strain OhILAs)).